A 1147-amino-acid chain; its full sequence is Nitric oxide synthase, inducible (1147 aa).

The tract at residues lysine 22–asparagine 51 is disordered. The DINNN-motif; mediates interaction with SPSB1, SPSB2 and SPSB4 signature appears at aspartate 23–asparagine 27. Residues cysteine 107 and cysteine 112 each coordinate Zn(2+). Residue serine 115 participates in (6R)-L-erythro-5,6,7,8-tetrahydrobiopterin binding. Cysteine 197 serves as a coordination point for heme b. L-arginine-binding residues include glutamine 260, tryptophan 369, tyrosine 370, and glutamate 374. Residues arginine 378, isoleucine 459, tryptophan 460, and phenylalanine 473 each coordinate (6R)-L-erythro-5,6,7,8-tetrahydrobiopterin. Tyrosine 488 lines the heme b pocket. A calmodulin-binding region spans residues phenylalanine 512–serine 532. Residues alanine 536–phenylalanine 674 enclose the Flavodoxin-like domain. FMN contacts are provided by threonine 542, glutamate 543, threonine 544, lysine 546, and serine 547. Phosphothreonine is present on threonine 564. Residue tyrosine 572 is modified to Phosphotyrosine. FMN is bound by residues serine 588, threonine 589, serine 625, cysteine 632, glutamate 658, and glutamine 662. Positions lysine 727–proline 967 constitute an FAD-binding FR-type domain. Arginine 747 is a binding site for NADP(+). Positions 769, 903, 905, 906, 921, and 923 each coordinate FAD. NADP(+) is bound at residue threonine 926. FAD is bound by residues tyrosine 927, valine 940, cysteine 941, and serine 942. The NADP(+) site is built by threonine 981, arginine 1014, serine 1043, arginine 1044, lysine 1050, tyrosine 1052, glutamine 1054, and aspartate 1087.

The protein belongs to the NOS family. As to quaternary structure, homodimer. Interacts with NHERF1. Interacts with GAPDH; induced by oxidatively-modified low-densitity lipoprotein (LDL(ox)). Interacts with S100A8 and S100A9 to form the iNOS-S100A8/9 transnitrosylase complex. Interacts with SPSB1, SPSB2 and SPSB4. Interacts with ELOC and CUL5 in the presence of SPSB1 or SPSB2 or SPSB4. Forms a complex with ASL, ASS1 and HSP90AA1; the complex regulates cell-autonomous L-arginine synthesis and citrulline recycling while channeling extracellular L-arginine to nitric oxide synthesis pathway. Heme b is required as a cofactor. It depends on FAD as a cofactor. Requires FMN as cofactor. The cofactor is (6R)-L-erythro-5,6,7,8-tetrahydrobiopterin. Polyubiquitinated; mediated by SPSB1, SPSB2 and SPSB4, leading to proteasomal degradation. In terms of tissue distribution, in normal kidney, expressed primarily in the medullary thick ascending limb, with minor amounts in the medullary collecting duct and vasa recta bundle.

It is found in the cytoplasm. The protein localises to the cytosol. It carries out the reaction 2 L-arginine + 3 NADPH + 4 O2 + H(+) = 2 L-citrulline + 2 nitric oxide + 3 NADP(+) + 4 H2O. Its activity is regulated as follows. Not stimulated by calcium/calmodulin. Aspirin inhibits expression and function of this enzyme and effects may be exerted at the level of translational/post-translational modification and directly on the catalytic activity. Functionally, produces nitric oxide (NO) which is a messenger molecule with diverse functions throughout the body. In macrophages, NO mediates tumoricidal and bactericidal actions. Also has nitrosylase activity and mediates cysteine S-nitrosylation of cytoplasmic target proteins such PTGS2/COX2. As component of the iNOS-S100A8/9 transnitrosylase complex involved in the selective inflammatory stimulus-dependent S-nitrosylation of GAPDH implicated in regulation of the GAIT complex activity and probably multiple targets including ANXA5, EZR, MSN and VIM. Involved in inflammation, enhances the synthesis of pro-inflammatory mediators such as IL6 and IL8. This is Nitric oxide synthase, inducible (Nos2) from Rattus norvegicus (Rat).